Reading from the N-terminus, the 141-residue chain is HTH-type transcriptional repressor NsrR (141 aa).

The region spanning 2–129 (QLTSFTDYGL…DNYTLADLVE (128 aa)) is the HTH rrf2-type domain. Positions 28–51 (ISEVTDVYGVSRNHMVKIINQLSR) form a DNA-binding region, H-T-H motif. The [2Fe-2S] cluster site is built by C91, C96, and C102.

[2Fe-2S] cluster is required as a cofactor.

In terms of biological role, nitric oxide-sensitive repressor of genes involved in protecting the cell against nitrosative stress. May require iron for activity. In Escherichia coli O157:H7 (strain EC4115 / EHEC), this protein is HTH-type transcriptional repressor NsrR.